The sequence spans 297 residues: HTH-type transcriptional regulator ArgP (297 aa).

An HTH lysR-type domain is found at 4–60; it reads PDYRTLQALDAVIRERGFERAAQKLCITQSAVSQRIKQLENLFGQPLLVRTVPPRPT. The H-T-H motif DNA-binding region spans 21-40; sequence FERAAQKLCITQSAVSQRIK.

The protein belongs to the LysR transcriptional regulatory family. Homodimer.

Its function is as follows. Controls the transcription of genes involved in arginine and lysine metabolism. The chain is HTH-type transcriptional regulator ArgP from Serratia proteamaculans (strain 568).